The chain runs to 69 residues: Pleurain-A1 (69 aa).

The N-terminal stretch at 1–18 (MFTLKKTLLLLFFLGTIS) is a signal peptide. The propeptide occupies 19-43 (ISLCKQERDADEDDGRKMTEEEVKR). Cys-63 and Cys-69 form a disulfide bridge.

In terms of tissue distribution, expressed by the skin glands.

The protein resides in the secreted. Antimicrobial peptide. Has activity against the Gram-positive bacterium S.aureus ATCC2592 (MIC=15 ug/ml), the Gram-negative bacteria E.coli ATCC25922 (MIC=60 ug/ml), B.dysenteriae (MIC=120 ug/ml), H.pylori NTCT11637 (MIC=30 ug/ml), and the fungus C.albicans ATCC2002 (MIC=30 ug/ml). Has little hemolytic activity on rabbit red blood cells. In Nidirana pleuraden (Yunnan pond frog), this protein is Pleurain-A1.